Reading from the N-terminus, the 125-residue chain is Prepro-urotensin II-alpha (125 aa).

The N-terminal stretch at 1–21 is a signal peptide; sequence MMCNLLLSFSVLLLSCTHLVA. Positions 109–111 are excised as a propeptide; it reads QFR. Cys-119 and Cys-124 are joined by a disulfide.

Belongs to the urotensin-2 family.

The protein resides in the secreted. In terms of biological role, urotensin is found in the teleost caudal neurosecretory system. It has a suggested role in osmoregulation and as a corticotropin-releasing factor. The non-hormonal portion of this precursor may be a urotensin binding protein, urophysin. This chain is Prepro-urotensin II-alpha, found in Cyprinus carpio (Common carp).